Reading from the N-terminus, the 346-residue chain is Heparan sulfate glucosamine 3-O-sulfotransferase 5 (346 aa).

The Cytoplasmic portion of the chain corresponds to 1–12 (MLFKQQAWLRQK). The helical; Signal-anchor for type II membrane protein transmembrane segment at 13–32 (LLVLGSLAVGSLLYLVARVG) threads the bilayer. At 33–346 (SLDRLQPICP…QITGRTLNWP (314 aa)) the chain is on the lumenal side. 3'-phosphoadenylyl sulfate is bound at residue 100–104 (KGGTR). Substrate is bound by residues 122-128 (EIHFFDN) and 155-158 (KSPA). Residues arginine 183 and serine 191 each coordinate 3'-phosphoadenylyl sulfate. Residue 226–227 (YK) participates in substrate binding. Asparagine 287 carries an N-linked (GlcNAc...) asparagine glycan. A 3'-phosphoadenylyl sulfate-binding site is contributed by tyrosine 293. Residues cysteine 294 and cysteine 304 are joined by a disulfide bond. 309–313 (KGRIH) is a 3'-phosphoadenylyl sulfate binding site.

It belongs to the sulfotransferase 1 family. Highly expressed in skeletal muscle and fetal brain, and also found in adult brain, spinal cord, cerebellum and colon.

The protein localises to the golgi apparatus membrane. The catalysed reaction is alpha-D-glucosaminyl-[heparan sulfate](n) + 3'-phosphoadenylyl sulfate = 3-sulfo-alpha-D-glucosaminyl-[heparan sulfate](n) + adenosine 3',5'-bisphosphate + H(+). Sulfotransferase that utilizes 3'-phospho-5'-adenylyl sulfate (PAPS) to catalyze the transfer of a sulfo group to position 3 of glucosamine residues in heparan. Catalyzes the rate limiting step in the biosynthesis of heparan sulfate (HSact). This modification is a crucial step in the biosynthesis of anticoagulant heparan sulfate as it completes the structure of the antithrombin pentasaccharide binding site. Also generates GlcUA-GlcNS or IdoUA-GlcNS and IdoUA2S-GlcNH2. The substrate-specific O-sulfation generates an enzyme-modified heparan sulfate which acts as a binding receptor to Herpes simplex virus-1 (HSV-1) and permits its entry. This Homo sapiens (Human) protein is Heparan sulfate glucosamine 3-O-sulfotransferase 5 (HS3ST5).